A 110-amino-acid polypeptide reads, in one-letter code: Large ribosomal subunit protein uL22 (110 aa).

This sequence belongs to the universal ribosomal protein uL22 family. As to quaternary structure, part of the 50S ribosomal subunit.

Its function is as follows. This protein binds specifically to 23S rRNA; its binding is stimulated by other ribosomal proteins, e.g. L4, L17, and L20. It is important during the early stages of 50S assembly. It makes multiple contacts with different domains of the 23S rRNA in the assembled 50S subunit and ribosome. Functionally, the globular domain of the protein is located near the polypeptide exit tunnel on the outside of the subunit, while an extended beta-hairpin is found that lines the wall of the exit tunnel in the center of the 70S ribosome. The sequence is that of Large ribosomal subunit protein uL22 from Paracidovorax citrulli (strain AAC00-1) (Acidovorax citrulli).